The chain runs to 643 residues: Versicolorin B synthase (643 aa).

The propeptide occupies 1–41 (MGRNWFQVTAMAVVPVVGIMAAVNPTILSSAASSLPSLGAM). FAD contacts are provided by residues 84–85 (TA) and 105–106 (EA). The N-linked (GlcNAc...) asparagine glycan is linked to asparagine 116. 171–174 (GAML) is a binding site for FAD. N-linked (GlcNAc...) asparagine glycosylation is found at asparagine 221 and asparagine 507. Residues alanine 613 and 624 to 625 (PM) contribute to the FAD site.

This sequence belongs to the GMC oxidoreductase family. In terms of assembly, homodimer. FAD serves as cofactor. In terms of processing, N-glycosylated.

It is found in the cytoplasm. It localises to the cytosol. It catalyses the reaction (2S-3S)-versiconal hemiacetal = versicolorin B + H2O. The enzyme catalyses (S)-5'-oxoaverantin + H(+) = (1'S,5'S)-averufin + H2O. Its pathway is mycotoxin biosynthesis; aflatoxin biosynthesis. Dual cyclase; part of the gene cluster that mediates the biosynthesis of aflatoxins, a group of polyketide-derived furanocoumarins, and part of the most toxic and carcinogenic compounds among the known mycotoxins. The four major aflatoxins produced by A.parasiticus are aflatoxin B1 (AFB1), aflatoxin B2 (AFB2), aflatoxin G1 (AFG1) and aflatoxin G2 (AFG2). Aflk plays a dual role within the aflatoxin pathway, as a 5'-oxoaverantin cyclase that mediates conversion of 5'-oxoaverantin (OAVN) to averufin (AVF), as well as a versicolorin B synthase that converts versiconal (VAL) to versicolorin B (VERB) by closing the bisfuran ring of aflatoxin which is required for DNA-binding, thus giving to aflatoxin its activity as a mutagen. The biosynthesis of aflatoxins begins with the norsolorinic acid synthase aflC that combines a hexanoyl starter unit produced by the fatty acid synthase aflA/aflB and 7 malonyl-CoA extender units to synthesize the precursor NOR. The second step is the conversion of NOR to averantin and requires the norsolorinic acid ketoreductase aflD, which catalyzes the dehydration of norsolorinic acid to form (1'S)-averantin. The norsolorinic acid reductases aflE and aflF may also play a role in the conversion of NOR to AVN. The cytochrome P450 monooxygenase aflG then catalyzes the hydroxylation of AVN to 5'hydroxyaverantin (HAVN). The next step is performed by the 5'-hydroxyaverantin dehydrogenase aflH that transforms HAVN to 5'-oxoaverantin (OAVN) which is further converted to averufin (AVF) by aflK that plays a dual role in the pathway, as a 5'-oxoaverantin cyclase that mediates conversion of 5'-oxoaverantin, as well as a versicolorin B synthase in a later step in the pathway. The averufin oxidase aflI catalyzes the conversion of AVF to versiconal hemiacetal acetate (VHA). VHA is then the substrate for the versiconal hemiacetal acetate esterase aflJ to yield versiconal (VAL). Versicolorin B synthase aflK then converts VAL to versicolorin B (VERB) by closing the bisfuran ring of aflatoxin which is required for DNA-binding, thus giving to aflatoxin its activity as a mutagen. Then, the activity of the versicolorin B desaturase aflL leads to versicolorin A (VERA). A branch point starts from VERB since it can also be converted to dihydrodemethylsterigmatocystin (DMDHST), probably also by aflL, VERA being a precursor for aflatoxins B1 and G1, and DMDHST for aflatoxins B2 and G2. Next, the versicolorin reductase aflM and the cytochrome P450 monooxygenase aflN are involved in conversion of VERA to demethylsterigmatocystin (DMST). AflX and aflY seem also involved in this step, through probable aflX-mediated epoxide ring-opening step following versicolorin A oxidation and aflY-mediated Baeyer-Villiger oxidation required for the formation of the xanthone ring. The methyltransferase aflO then leads to the modification of DMST to sterigmatocystin (ST), and of DMDHST to dihydrosterigmatocystin (DHST). Both ST and DHST are then substrates of the O-methyltransferase aflP to yield O-methylsterigmatocystin (OMST) and dihydro-O-methylsterigmatocystin (DHOMST), respectively. Finally OMST is converted to aflatoxins B1 and G1, and DHOMST to aflatoxins B2 and G2, via the action of several enzymes including O-methylsterigmatocystin oxidoreductase aflQ, the cytochrome P450 monooxygenase aflU, but also the NADH-dependent flavin oxidoreductase nadA which is specifically required for the synthesis of AFG1. The sequence is that of Versicolorin B synthase from Aspergillus parasiticus (strain ATCC 56775 / NRRL 5862 / SRRC 143 / SU-1).